Consider the following 164-residue polypeptide: ATP synthase subunit b (164 aa).

A helical membrane pass occupies residues 4-24 (IHFDLTLVVQVLSFLLLVYIL).

Belongs to the ATPase B chain family. F-type ATPases have 2 components, F(1) - the catalytic core - and F(0) - the membrane proton channel. F(1) has five subunits: alpha(3), beta(3), gamma(1), delta(1), epsilon(1). F(0) has three main subunits: a(1), b(2) and c(10-14). The alpha and beta chains form an alternating ring which encloses part of the gamma chain. F(1) is attached to F(0) by a central stalk formed by the gamma and epsilon chains, while a peripheral stalk is formed by the delta and b chains.

It localises to the cell membrane. Functionally, f(1)F(0) ATP synthase produces ATP from ADP in the presence of a proton or sodium gradient. F-type ATPases consist of two structural domains, F(1) containing the extramembraneous catalytic core and F(0) containing the membrane proton channel, linked together by a central stalk and a peripheral stalk. During catalysis, ATP synthesis in the catalytic domain of F(1) is coupled via a rotary mechanism of the central stalk subunits to proton translocation. In terms of biological role, component of the F(0) channel, it forms part of the peripheral stalk, linking F(1) to F(0). The sequence is that of ATP synthase subunit b from Desulfitobacterium hafniense (strain Y51).